The following is a 193-amino-acid chain: Zinc finger protein AZF3 (193 aa).

C2H2-type zinc fingers lie at residues Tyr-75–His-97 and His-118–His-140.

As to expression, expressed in roots.

The protein localises to the nucleus. Functionally, transcriptional repressor probably involved in abiotic stress responses. Binds DNA in a sequence-specific manner and can repress the transactivation activity of other transcription factors. The sequence is that of Zinc finger protein AZF3 (AZF3) from Arabidopsis thaliana (Mouse-ear cress).